Reading from the N-terminus, the 1368-residue chain is DNA-directed RNA polymerase subunit beta (1368 aa).

Belongs to the RNA polymerase beta chain family. In terms of assembly, the RNAP catalytic core consists of 2 alpha, 1 beta, 1 beta' and 1 omega subunit. When a sigma factor is associated with the core the holoenzyme is formed, which can initiate transcription.

It catalyses the reaction RNA(n) + a ribonucleoside 5'-triphosphate = RNA(n+1) + diphosphate. Its function is as follows. DNA-dependent RNA polymerase catalyzes the transcription of DNA into RNA using the four ribonucleoside triphosphates as substrates. The sequence is that of DNA-directed RNA polymerase subunit beta from Ralstonia nicotianae (strain ATCC BAA-1114 / GMI1000) (Ralstonia solanacearum).